Consider the following 141-residue polypeptide: Sperm-associated microtubule inner protein 10 (141 aa).

Positions 1-16 (MASEKDDGPALPKLDD) are enriched in basic and acidic residues. The segment at 1-33 (MASEKDDGPALPKLDDDNQTAENTCKPAEEQPQ) is disordered.

Microtubule inner protein component of sperm flagellar doublet microtubules. In terms of tissue distribution, expressed predominantly in the testis.

The protein localises to the cytoplasm. It localises to the cytoskeleton. Its subcellular location is the flagellum axoneme. Its function is as follows. Microtubule inner protein (MIP) part of the dynein-decorated doublet microtubules (DMTs) in flagellum axoneme, which is required for flagellum beating. May serve to reinforce and thus stabilize the microtubule structure in the sperm flagella. Involved in the regulation of sperm motility. In Mus musculus (Mouse), this protein is Sperm-associated microtubule inner protein 10 (Spmip10).